Reading from the N-terminus, the 239-residue chain is Apoptosis regulator Bcl-2 (239 aa).

A BH4 motif is present at residues 10 to 30; the sequence is DNREIVMKYIHYKLSQRGYEW. Residues 39 to 85 form a disordered region; the sequence is PPGAAPAPGIFSSQPGHTPHPAASRDPVARTSPLQTPAAPGAAAGPA. At Thr69 the chain carries Phosphothreonine; by MAPK8. Residue Ser70 is modified to Phosphoserine; by MAPK8 and PKC. Positions 75–85 are enriched in low complexity; the sequence is PAAPGAAAGPA. Ser87 carries the post-translational modification Phosphoserine; by MAPK8. Positions 92–107 are required for interaction with SEPTIN4 isoform ARTS. Required XIAP-mediated ubiquitination and apoptosis; the sequence is VVHLTLRQAGDDFSRR. Positions 93-107 match the BH3 motif; the sequence is VHLTLRQAGDDFSRR. The BH1 motif lies at 136 to 155; that stretch reads ELFRDGVNWGRIVAFFEFGG. Residues 187–202 carry the BH2 motif; sequence TWIQDNGGWDAFVELY. A helical transmembrane segment spans residues 212–233; sequence FSWLSLKTLLSLALVGACITLG.

It belongs to the Bcl-2 family. In terms of assembly, forms homodimers, and heterodimers with BAX, BAD, BAK and Bcl-X(L). Heterodimerization with BAX requires intact BH1 and BH2 motifs, and is necessary for anti-apoptotic activity. Part of a complex composed of SEPTIN4 isoform ARTS, XIAP and BCL2, within the complex interacts (via BH3 domain) with SEPTIN4 isoform ARTS and XIAP, SEPTIN4 isoform ARTS acts as a scaffold protein and stabilizes the complex. Component of the complex, at least composed of LRPPRC, BECN1 and BCL2; the interactions prevent BECN1 from forming an autophagy-inducing complex with PIK3C3. Interacts with EI24. Also interacts with APAF1, BBC3, BCL2L1, BNIPL, MRPL41 and TP53BP2. Binding to FKBP8 seems to target BCL2 to the mitochondria and probably interferes with the binding of BCL2 to its targets. Interacts with BAG1 in an ATP-dependent manner. Interacts with RAF1 (the 'Ser-338' and 'Ser-339' phosphorylated form). Interacts (via the BH4 domain) with EGLN3; the interaction prevents the formation of the BAX-BCL2 complex and inhibits the anti-apoptotic activity of BCL2. Interacts with G0S2; this interaction also prevents the formation of the anti-apoptotic BAX-BCL2 complex. Interacts with RTL10/BOP. Interacts with the SCF(FBXO10) complex. Interacts (via the loop between motifs BH4 and BH3) with NLRP1 (via LRR repeats), but not with NLRP2, NLRP3, NLRP4, PYCARD, nor MEFV. Interacts with GIMAP3/IAN4, GIMAP4/IAN1 and GIMAP5/IAN5. Interacts with BCAP31. Interacts with IRF3; the interaction is inhibited by Sendai virus infection. Interacts with BECN1; thereby inhibiting autophagy in non-starvation conditions. Interacts with AMBRA1; thereby inhibiting autophagy. As to quaternary structure, (Microbial infection) Interacts with Toxoplasma gondii ROP17; the interaction probably promotes BCL2 phosphorylation and degradation. Phosphorylation/dephosphorylation on Ser-70 regulates anti-apoptotic activity. Growth factor-stimulated phosphorylation on Ser-70 by PKC is required for the anti-apoptosis activity and occurs during the G2/M phase of the cell cycle. In the absence of growth factors, BCL2 appears to be phosphorylated by other protein kinases such as ERKs and stress-activated kinases. Phosphorylated by MAPK8/JNK1 at Thr-69, Ser-70 and Ser-87, which stimulates starvation-induced autophagy. Dephosphorylated by protein phosphatase 2A (PP2A). In terms of processing, proteolytically cleaved by caspases during apoptosis. The cleaved protein, lacking the BH4 motif, has pro-apoptotic activity, causes the release of cytochrome c into the cytosol promoting further caspase activity. Post-translationally, monoubiquitinated by PRKN, leading to an increase in its stability. Ubiquitinated by SCF(FBXO10), leading to its degradation by the proteasome. Ubiquitinated by XIAP, leading to its degradation by the proteasome. Expressed in a variety of tissues.

Its subcellular location is the mitochondrion outer membrane. The protein resides in the nucleus membrane. It is found in the endoplasmic reticulum membrane. It localises to the cytoplasm. Functionally, suppresses apoptosis in a variety of cell systems including factor-dependent lymphohematopoietic and neural cells. Regulates cell death by controlling the mitochondrial membrane permeability. Appears to function in a feedback loop system with caspases. Inhibits caspase activity either by preventing the release of cytochrome c from the mitochondria and/or by binding to the apoptosis-activating factor (APAF-1). Also acts as an inhibitor of autophagy: interacts with BECN1 and AMBRA1 during non-starvation conditions and inhibits their autophagy function. May attenuate inflammation by impairing NLRP1-inflammasome activation, hence CASP1 activation and IL1B release. This is Apoptosis regulator Bcl-2 (BCL2) from Homo sapiens (Human).